The sequence spans 145 residues: Putative pre-16S rRNA nuclease (145 aa).

This sequence belongs to the YqgF nuclease family.

The protein resides in the cytoplasm. Could be a nuclease involved in processing of the 5'-end of pre-16S rRNA. This is Putative pre-16S rRNA nuclease from Pseudomonas fluorescens (strain Pf0-1).